Consider the following 554-residue polypeptide: Phosphomethylpyrimidine synthase (554 aa).

Residues N188, M217, Y246, H282, 302–304, 343–346, and E382 each bind substrate; these read SRG and DGLR. H386 is a binding site for Zn(2+). A substrate-binding site is contributed by Y409. Zn(2+) is bound at residue H450. 3 residues coordinate [4Fe-4S] cluster: C530, C533, and C538.

Belongs to the ThiC family. In terms of assembly, homodimer. The cofactor is [4Fe-4S] cluster.

The enzyme catalyses 5-amino-1-(5-phospho-beta-D-ribosyl)imidazole + S-adenosyl-L-methionine = 4-amino-2-methyl-5-(phosphooxymethyl)pyrimidine + CO + 5'-deoxyadenosine + formate + L-methionine + 3 H(+). It functions in the pathway cofactor biosynthesis; thiamine diphosphate biosynthesis. In terms of biological role, catalyzes the synthesis of the hydroxymethylpyrimidine phosphate (HMP-P) moiety of thiamine from aminoimidazole ribotide (AIR) in a radical S-adenosyl-L-methionine (SAM)-dependent reaction. In Coxiella burnetii (strain RSA 493 / Nine Mile phase I), this protein is Phosphomethylpyrimidine synthase.